A 123-amino-acid polypeptide reads, in one-letter code: Large ribosomal subunit protein bL12 (123 aa).

This sequence belongs to the bacterial ribosomal protein bL12 family. As to quaternary structure, homodimer. Part of the ribosomal stalk of the 50S ribosomal subunit. Forms a multimeric L10(L12)X complex, where L10 forms an elongated spine to which 2 to 4 L12 dimers bind in a sequential fashion. Binds GTP-bound translation factors.

Forms part of the ribosomal stalk which helps the ribosome interact with GTP-bound translation factors. Is thus essential for accurate translation. The sequence is that of Large ribosomal subunit protein bL12 from Salmonella arizonae (strain ATCC BAA-731 / CDC346-86 / RSK2980).